Here is a 399-residue protein sequence, read N- to C-terminus: uncharacterized protein (399 aa).

The protein belongs to the TelA family.

This is an uncharacterized protein from Listeria monocytogenes serovar 1/2a (strain ATCC BAA-679 / EGD-e).